Reading from the N-terminus, the 72-residue chain is Alpha-conotoxin SII (72 aa).

A signal peptide spans 1–21; the sequence is MGMRMMFTVFLLVVLATTVVS. The propeptide occupies 22 to 50; that stretch reads FPSDRASDGRDDEAKDERSDMHESDRNGR. Residues 23–51 are disordered; it reads PSDRASDGRDDEAKDERSDMHESDRNGRG. Residues 26–49 show a composition bias toward basic and acidic residues; sequence RASDGRDDEAKDERSDMHESDRNG. Cystine bridges form between Cys-52/Cys-68, Cys-53/Cys-58, and Cys-54/Cys-64. The propeptide occupies 70 to 72; the sequence is RTL.

The protein belongs to the conotoxin A superfamily. Post-translationally, the disulfide bond Cys-52-Cys-68 (Cys I-VI), which corresponds to an extra disulfide bond when compared to the cysteine framework I (CC-C-C), does contribute to conotoxin SII stability and imparts a unique binding mode at the nAChR. As to expression, expressed by the venom duct.

It localises to the secreted. Functionally, alpha-conotoxins act on postsynaptic membranes, they bind to the nicotinic acetylcholine receptors (nAChR) and thus inhibit them. This toxin potently inhibits the rodent muscle nAChR (IC(50)=120 nM (adult subtype, alpha-1-beta-1-delta-epsilon/CHRNA1-CHRNB1-CHRND-CHRNE) and IC(50)=370 nM (fetal subtype, alpha-1-beta-1-gamma-delta/CHRNA1-CHRNB1-CHRNG-CHRND)) and weakly inhibits neuronal nAChRs. In contrast to alpha-conotoxins bearing 2 disulfide bonds (framework I), this conotoxin acts via a unique binding mode with the helix and the N- and C-termini buried in the binding pocket of muscle nAChRs. The chain is Alpha-conotoxin SII from Conus striatus (Striated cone).